A 475-amino-acid chain; its full sequence is C3a anaphylatoxin chemotactic receptor (475 aa).

The Extracellular portion of the chain corresponds to M1–T23. N9 is a glycosylation site (N-linked (GlcNAc...) asparagine). Residues I24–W46 form a helical membrane-spanning segment. Over V47–N57 the chain is Cytoplasmic. A helical membrane pass occupies residues T58–A80. Residues H81 to K96 are Extracellular-facing. Cysteines 95 and 172 form a disulfide. The helical transmembrane segment at F97–L118 threads the bilayer. The Cytoplasmic portion of the chain corresponds to D119–A139. Residues C140 to Y160 traverse the membrane as a helical segment. Residues R161–R331 lie on the Extracellular side of the membrane. N-linked (GlcNAc...) asparagine glycosylation is present at N168. Sulfotyrosine occurs at positions 174 and 183. 2 N-linked (GlcNAc...) asparagine glycosylation sites follow: N273 and N292. The chain crosses the membrane as a helical span at residues L332–I351. Residues F352–H368 are Cytoplasmic-facing. A helical transmembrane segment spans residues L369–I391. Over L392 to D408 the chain is Extracellular. The helical transmembrane segment at H409–L429 threads the bilayer. Residues G430–V475 lie on the Cytoplasmic side of the membrane. S450 is subject to Phosphoserine.

It belongs to the G-protein coupled receptor 1 family. In terms of assembly, interacts with VGF-derived peptide TLQP-21. As to expression, expressed in the heart, kidney, lung, liver, peritoneal macrophages and spleen.

It is found in the cell membrane. Functionally, receptor for the chemotactic and inflammatory peptide anaphylatoxin C3a. This receptor stimulates chemotaxis, granule enzyme release and superoxide anion production. The chain is C3a anaphylatoxin chemotactic receptor (C3AR1) from Cavia porcellus (Guinea pig).